The sequence spans 275 residues: Elongation factor Ts (275 aa).

Positions 76–79 (TDFV) are involved in Mg(2+) ion dislocation from EF-Tu.

The protein belongs to the EF-Ts family.

The protein resides in the cytoplasm. Its function is as follows. Associates with the EF-Tu.GDP complex and induces the exchange of GDP to GTP. It remains bound to the aminoacyl-tRNA.EF-Tu.GTP complex up to the GTP hydrolysis stage on the ribosome. In Mycobacterium avium (strain 104), this protein is Elongation factor Ts.